The chain runs to 52 residues: Conotoxin Cal6.36 (52 aa).

Positions 1–22 (MKVTCVLTLAVLILTVGQMVTA) are cleaved as a signal peptide. Intrachain disulfides connect Cys24-Cys39, Cys31-Cys43, and Cys38-Cys47.

As to expression, expressed by the venom duct.

It is found in the secreted. Its function is as follows. Probable neurotoxin. This is Conotoxin Cal6.36 from Californiconus californicus (California cone).